The chain runs to 238 residues: Tetraspanin-4 (238 aa).

Topologically, residues 1 to 13 are cytoplasmic; that stretch reads MARACLQAVKYLM. A helical membrane pass occupies residues 14 to 34; it reads FAFNLLFWLGGCGVLGVGIWL. The Extracellular portion of the chain corresponds to 35–55; that stretch reads AATQGSFATLSSSFPSLSAAN. The helical transmembrane segment at 56 to 76 threads the bilayer; it reads LLIITGAFVMAIGFVGCLGAI. The Cytoplasmic portion of the chain corresponds to 77–85; that stretch reads KENKCLLLT. Residues 86 to 106 form a helical membrane-spanning segment; sequence FFLLLLLVFLLEATIAILFFA. At 107-201 the chain is on the extracellular side; it reads YTDKIDRYAQ…ETVKVWLQEN (95 aa). N-linked (GlcNAc...) asparagine glycosylation is found at asparagine 152 and asparagine 161. Residues 202–222 traverse the membrane as a helical segment; it reads LLAVGIFGLCTALVQILGLTF. The Cytoplasmic segment spans residues 223–238; that stretch reads AMTMYCQVVKADTYCA.

It belongs to the tetraspanin (TM4SF) family. As to quaternary structure, forms a complex with integrins.

The protein resides in the membrane. The polypeptide is Tetraspanin-4 (TSPAN4) (Pongo abelii (Sumatran orangutan)).